The chain runs to 259 residues: Phosphate import ATP-binding protein PstB (259 aa).

The ABC transporter domain occupies 13 to 254 (IQVRDLNFYY…PAQRQTEDYI (242 aa)). Residue 45 to 52 (GPSGCGKS) participates in ATP binding.

Belongs to the ABC transporter superfamily. Phosphate importer (TC 3.A.1.7) family. As to quaternary structure, the complex is composed of two ATP-binding proteins (PstB), two transmembrane proteins (PstC and PstA) and a solute-binding protein (PstS).

It is found in the cell inner membrane. The enzyme catalyses phosphate(out) + ATP + H2O = ADP + 2 phosphate(in) + H(+). In terms of biological role, part of the ABC transporter complex PstSACB involved in phosphate import. Responsible for energy coupling to the transport system. This chain is Phosphate import ATP-binding protein PstB, found in Edwardsiella tarda.